A 548-amino-acid chain; its full sequence is Membrane protein insertase YidC (548 aa).

Residues 6-26 (NLLVIALLFVSFMIWQAWEQD) form a helical membrane-spanning segment. The disordered stretch occupies residues 28-56 (NPQPQTQQTTQTTTTAAGSAADQGVPASG). The span at 29 to 42 (PQPQTQQTTQTTTT) shows a compositional bias: low complexity. A run of 4 helical transmembrane segments spans residues 350–370 (FVGN…GIMY), 424–444 (FPLI…MGSI), 458–478 (LSAQ…MFFI), and 499–519 (PVIF…YYIV).

This sequence belongs to the OXA1/ALB3/YidC family. Type 1 subfamily. As to quaternary structure, interacts with the Sec translocase complex via SecD. Specifically interacts with transmembrane segments of nascent integral membrane proteins during membrane integration.

It is found in the cell inner membrane. In terms of biological role, required for the insertion and/or proper folding and/or complex formation of integral membrane proteins into the membrane. Involved in integration of membrane proteins that insert both dependently and independently of the Sec translocase complex, as well as at least some lipoproteins. Aids folding of multispanning membrane proteins. This is Membrane protein insertase YidC from Salmonella newport (strain SL254).